A 70-amino-acid chain; its full sequence is Exodeoxyribonuclease 7 small subunit (70 aa).

It belongs to the XseB family. In terms of assembly, heterooligomer composed of large and small subunits.

It localises to the cytoplasm. The enzyme catalyses Exonucleolytic cleavage in either 5'- to 3'- or 3'- to 5'-direction to yield nucleoside 5'-phosphates.. Its function is as follows. Bidirectionally degrades single-stranded DNA into large acid-insoluble oligonucleotides, which are then degraded further into small acid-soluble oligonucleotides. The protein is Exodeoxyribonuclease 7 small subunit of Streptococcus gordonii (strain Challis / ATCC 35105 / BCRC 15272 / CH1 / DL1 / V288).